The sequence spans 603 residues: Bifunctional 3-dehydroquinate dehydratase/shikimate dehydrogenase, chloroplastic (603 aa).

The span at 1 to 10 (MAASSTNARL) shows a compositional bias: polar residues. The tract at residues 1 to 22 (MAASSTNARLTNPPRLLSKPRL) is disordered. A chloroplast-targeting transit peptide spans 1–66 (MAASSTNARL…VVFSDQRRRR (66 aa)). Positions 13-22 (PPRLLSKPRL) are enriched in low complexity. The 3-dehydroquinate dehydratase stretch occupies residues 96–313 (ICAPVMADSI…QPTIKDLLDL (218 aa)). 3-dehydroshikimate is bound by residues E124, R126, and R155. H214 acts as the Proton acceptor; for 3-dehydroquinate dehydratase activity in catalysis. The 3-dehydroshikimate site is built by K241, R279, S300, and Q304. The Schiff-base intermediate with substrate; for 3-dehydroquinate dehydratase activity role is filled by K241. Residues 328–558 (IIGKPVSHSK…VYTPRITRLL (231 aa)) form a shikimate dehydrogenase region. S336, S338, T381, K385, N406, and D423 together coordinate shikimate. Catalysis depends on K385, which acts as the For shikimate dehydrogenase activity. D423 functions as the For shikimate dehydrogenase activity in the catalytic mechanism. NADP(+) contacts are provided by A461, G463, A464, N483, T485, R488, M525, and A548. Shikimate is bound at residue Y550. G571 contributes to the NADP(+) binding site. Residues Q578 and Q582 each contribute to the shikimate site.

This sequence in the N-terminal section; belongs to the type-I 3-dehydroquinase family. It in the C-terminal section; belongs to the shikimate dehydrogenase family. Monomer.

The protein localises to the plastid. The protein resides in the chloroplast. It carries out the reaction 3-dehydroquinate = 3-dehydroshikimate + H2O. The catalysed reaction is shikimate + NADP(+) = 3-dehydroshikimate + NADPH + H(+). It functions in the pathway metabolic intermediate biosynthesis; chorismate biosynthesis; chorismate from D-erythrose 4-phosphate and phosphoenolpyruvate: step 3/7. Its pathway is metabolic intermediate biosynthesis; chorismate biosynthesis; chorismate from D-erythrose 4-phosphate and phosphoenolpyruvate: step 4/7. In terms of biological role, bifunctional dehydroquinate dehydratase-shikimate dehydrogenase enzyme that catalyzes two steps in the chorismate biosynthesis pathway. The protein is Bifunctional 3-dehydroquinate dehydratase/shikimate dehydrogenase, chloroplastic of Arabidopsis thaliana (Mouse-ear cress).